A 590-amino-acid polypeptide reads, in one-letter code: Potassium-transporting ATPase potassium-binding subunit (590 aa).

A run of 4 helical transmembrane segments spans residues 3–23 (AFLL…RPLG), 63–83 (HYAL…YALQ), 134–154 (GLAV…IALI), and 177–197 (LYVL…QGAI). The interval 217–244 (PKTDAQGNPIKDAQGNPVTEKATTQKQT) is disordered. The next 8 membrane-spanning stretches (helical) occupy residues 284-304 (FVQM…FGAM), 312-332 (WAVL…EMWA), 359-379 (FGVV…CGAV), 388-408 (ALGG…FGGV), 411-431 (GLYG…LMIG), 450-470 (SIAI…AVLA), 515-535 (VALG…VLAM), and 558-578 (LFVV…YIPA).

Belongs to the KdpA family. In terms of assembly, the system is composed of three essential subunits: KdpA, KdpB and KdpC.

It is found in the cell inner membrane. Its function is as follows. Part of the high-affinity ATP-driven potassium transport (or Kdp) system, which catalyzes the hydrolysis of ATP coupled with the electrogenic transport of potassium into the cytoplasm. This subunit binds the periplasmic potassium ions and delivers the ions to the membrane domain of KdpB through an intramembrane tunnel. This Ralstonia nicotianae (strain ATCC BAA-1114 / GMI1000) (Ralstonia solanacearum) protein is Potassium-transporting ATPase potassium-binding subunit.